Consider the following 910-residue polypeptide: Protein translocase subunit SecA (910 aa).

ATP contacts are provided by residues Gln89, Gly107–Thr111, and Asp502. Residues Cys894, Cys896, Cys905, and His906 each contribute to the Zn(2+) site.

The protein belongs to the SecA family. Monomer and homodimer. Part of the essential Sec protein translocation apparatus which comprises SecA, SecYEG and auxiliary proteins SecDF-YajC and YidC. Requires Zn(2+) as cofactor.

It is found in the cell inner membrane. It localises to the cytoplasm. It catalyses the reaction ATP + H2O + cellular proteinSide 1 = ADP + phosphate + cellular proteinSide 2.. Functionally, part of the Sec protein translocase complex. Interacts with the SecYEG preprotein conducting channel. Has a central role in coupling the hydrolysis of ATP to the transfer of proteins into and across the cell membrane, serving both as a receptor for the preprotein-SecB complex and as an ATP-driven molecular motor driving the stepwise translocation of polypeptide chains across the membrane. This Mesorhizobium japonicum (strain LMG 29417 / CECT 9101 / MAFF 303099) (Mesorhizobium loti (strain MAFF 303099)) protein is Protein translocase subunit SecA.